A 1342-amino-acid polypeptide reads, in one-letter code: WD repeat-containing protein 19 (1342 aa).

WD repeat units follow at residues 11–51 (TWLG…RSEI), 52–92 (NLPG…TSQL), 95–134 (GMRD…KIPV), 137–175 (KHTK…IRQT), 273–311 (NHKD…DMYV), and 317–356 (EENK…LGDA). TPR repeat units follow at residues 736–769 (AQDL…AKHL), 775–808 (PFIS…DNKE), 840–873 (RVLK…DKAA), 895–928 (PKIH…QSVI), 951–984 (LDGA…NEAF), and 1020–1053 (EKRY…EDNV).

Component of the IFT complex A (IFT-A) complex. IFT-A complex is divided into a core subcomplex composed of IFT122:IFT140:WDR19 which is associated with TULP3 and a peripheral subcomplex composed of IFT43:WDR35:TTC21B. Interacts (via C-terminal region) with IFT122 (via C-terminal region). Interacts with BBS1. Interacts with TTC25. As to expression, some isoforms are tissue-specific. Highly expressed in the prostate. Lower expression in the cerebellum, pituitary gland, fetal lung, and pancreas. In normal prostate, expressed in both basal and luminal epithelial cells. No expression detected in fibromuscular stromal cells, endothelial cells, or infiltrating lymphocytes. Uniformed expression in prostate adenocarcinoma cells.

It is found in the cell projection. The protein resides in the cilium. The protein localises to the cytoplasm. It localises to the cytoskeleton. Its subcellular location is the cilium basal body. It is found in the photoreceptor outer segment. The protein resides in the flagellum. In terms of biological role, as component of the IFT complex A (IFT-A), a complex required for retrograde ciliary transport and entry into cilia of G protein-coupled receptors (GPCRs), it is involved in cilia function and/or assembly. Essential for functional IFT-A assembly and ciliary entry of GPCRs. Associates with the BBSome complex to mediate ciliary transport. This is WD repeat-containing protein 19 from Homo sapiens (Human).